Reading from the N-terminus, the 350-residue chain is UDP-3-O-acylglucosamine N-acyltransferase (350 aa).

His-248 acts as the Proton acceptor in catalysis.

It belongs to the transferase hexapeptide repeat family. LpxD subfamily. As to quaternary structure, homotrimer.

It catalyses the reaction a UDP-3-O-[(3R)-3-hydroxyacyl]-alpha-D-glucosamine + a (3R)-hydroxyacyl-[ACP] = a UDP-2-N,3-O-bis[(3R)-3-hydroxyacyl]-alpha-D-glucosamine + holo-[ACP] + H(+). It participates in bacterial outer membrane biogenesis; LPS lipid A biosynthesis. In terms of biological role, catalyzes the N-acylation of UDP-3-O-acylglucosamine using 3-hydroxyacyl-ACP as the acyl donor. Is involved in the biosynthesis of lipid A, a phosphorylated glycolipid that anchors the lipopolysaccharide to the outer membrane of the cell. This Nostoc punctiforme (strain ATCC 29133 / PCC 73102) protein is UDP-3-O-acylglucosamine N-acyltransferase.